The chain runs to 223 residues: MNIAKLIDHTILKANSTKEDVMKVIEEAKEYKFASVCINPTWVKLAADELAGHDVDVCTVIGFPLGASTTETKAFETKDAIAKGATEVDMVINVGALKDGDNELVEKDIYEVVQAAKGKALVKVIIETCLLTDEEKVRACELSVKAGADFVKTSTGFSTGGATAEDIALMRKTVGPNVGVKASGGVRTREDADKMVAAGASRVGASASVAIVLNDAKGATDNY.

Aspartate 89 functions as the Proton donor/acceptor in the catalytic mechanism. Catalysis depends on lysine 152, which acts as the Schiff-base intermediate with acetaldehyde. The Proton donor/acceptor role is filled by lysine 181.

It belongs to the DeoC/FbaB aldolase family. DeoC type 1 subfamily.

The protein resides in the cytoplasm. The catalysed reaction is 2-deoxy-D-ribose 5-phosphate = D-glyceraldehyde 3-phosphate + acetaldehyde. It participates in carbohydrate degradation; 2-deoxy-D-ribose 1-phosphate degradation; D-glyceraldehyde 3-phosphate and acetaldehyde from 2-deoxy-alpha-D-ribose 1-phosphate: step 2/2. Catalyzes a reversible aldol reaction between acetaldehyde and D-glyceraldehyde 3-phosphate to generate 2-deoxy-D-ribose 5-phosphate. This is Deoxyribose-phosphate aldolase from Bacillus cereus (strain B4264).